Consider the following 136-residue polypeptide: Large ribosomal subunit protein uL22 (136 aa).

It belongs to the universal ribosomal protein uL22 family. In terms of assembly, part of the 50S ribosomal subunit.

Its function is as follows. This protein binds specifically to 23S rRNA; its binding is stimulated by other ribosomal proteins, e.g. L4, L17, and L20. It is important during the early stages of 50S assembly. It makes multiple contacts with different domains of the 23S rRNA in the assembled 50S subunit and ribosome. The globular domain of the protein is located near the polypeptide exit tunnel on the outside of the subunit, while an extended beta-hairpin is found that lines the wall of the exit tunnel in the center of the 70S ribosome. The chain is Large ribosomal subunit protein uL22 from Parabacteroides distasonis (strain ATCC 8503 / DSM 20701 / CIP 104284 / JCM 5825 / NCTC 11152).